Consider the following 152-residue polypeptide: Small ribosomal subunit protein bS16 (152 aa).

Over residues 118–130 (AEKHKAKASEKKA) the composition is skewed to basic and acidic residues. Residues 118-152 (AEKHKAKASEKKAAAAASADEAGSAAADDAEGSES) are disordered. The segment covering 131-144 (AAAASADEAGSAAA) has biased composition (low complexity).

Belongs to the bacterial ribosomal protein bS16 family.

The chain is Small ribosomal subunit protein bS16 from Beutenbergia cavernae (strain ATCC BAA-8 / DSM 12333 / CCUG 43141 / JCM 11478 / NBRC 16432 / NCIMB 13614 / HKI 0122).